Reading from the N-terminus, the 309-residue chain is Lipoyl synthase (309 aa).

[4Fe-4S] cluster contacts are provided by cysteine 37, cysteine 42, cysteine 48, cysteine 67, cysteine 71, cysteine 74, and serine 281. The Radical SAM core domain occupies 53-270; it reads DGPGTATFML…RVAETEFGFL (218 aa).

Belongs to the radical SAM superfamily. Lipoyl synthase family. [4Fe-4S] cluster is required as a cofactor.

The protein localises to the cytoplasm. The catalysed reaction is [[Fe-S] cluster scaffold protein carrying a second [4Fe-4S](2+) cluster] + N(6)-octanoyl-L-lysyl-[protein] + 2 oxidized [2Fe-2S]-[ferredoxin] + 2 S-adenosyl-L-methionine + 4 H(+) = [[Fe-S] cluster scaffold protein] + N(6)-[(R)-dihydrolipoyl]-L-lysyl-[protein] + 4 Fe(3+) + 2 hydrogen sulfide + 2 5'-deoxyadenosine + 2 L-methionine + 2 reduced [2Fe-2S]-[ferredoxin]. Its pathway is protein modification; protein lipoylation via endogenous pathway; protein N(6)-(lipoyl)lysine from octanoyl-[acyl-carrier-protein]: step 2/2. Its function is as follows. Catalyzes the radical-mediated insertion of two sulfur atoms into the C-6 and C-8 positions of the octanoyl moiety bound to the lipoyl domains of lipoate-dependent enzymes, thereby converting the octanoylated domains into lipoylated derivatives. The polypeptide is Lipoyl synthase (Natronomonas pharaonis (strain ATCC 35678 / DSM 2160 / CIP 103997 / JCM 8858 / NBRC 14720 / NCIMB 2260 / Gabara) (Halobacterium pharaonis)).